The following is a 450-amino-acid chain: Chromosomal replication initiator protein DnaA (450 aa).

The tract at residues 1–71 (MEDVWLQAQS…SVRSLTDSHF (71 aa)) is domain I, interacts with DnaA modulators. Positions 71-113 (FQVELQVAARQQEKTAKSPRKSHTEDELGPVESEKCAPAEFST) are domain II. Positions 82-103 (QEKTAKSPRKSHTEDELGPVES) are disordered. The segment at 114–330 (NLNAKYTFDT…GMLIRLGAVA (217 aa)) is domain III, AAA+ region. 4 residues coordinate ATP: Gly-158, Gly-160, Lys-161, and Thr-162. A domain IV, binds dsDNA region spans residues 331 to 450 (SLTGKNITLD…IETLRKGLLN (120 aa)).

This sequence belongs to the DnaA family. Oligomerizes as a right-handed, spiral filament on DNA at oriC.

Its subcellular location is the cytoplasm. Its function is as follows. Plays an essential role in the initiation and regulation of chromosomal replication. ATP-DnaA binds to the origin of replication (oriC) to initiate formation of the DNA replication initiation complex once per cell cycle. Binds the DnaA box (a 9 base pair repeat at the origin) and separates the double-stranded (ds)DNA. Forms a right-handed helical filament on oriC DNA; dsDNA binds to the exterior of the filament while single-stranded (ss)DNA is stabiized in the filament's interior. The ATP-DnaA-oriC complex binds and stabilizes one strand of the AT-rich DNA unwinding element (DUE), permitting loading of DNA polymerase. After initiation quickly degrades to an ADP-DnaA complex that is not apt for DNA replication. Binds acidic phospholipids. In Geobacter metallireducens (strain ATCC 53774 / DSM 7210 / GS-15), this protein is Chromosomal replication initiator protein DnaA.